A 250-amino-acid polypeptide reads, in one-letter code: ATP synthase subunit a (250 aa).

6 helical membrane passes run Val-25–Leu-45, Val-84–Leu-104, Ile-115–Tyr-135, Phe-141–Ile-161, Ala-187–Ala-209, and Glu-223–Asn-243.

This sequence belongs to the ATPase A chain family. F-type ATPases have 2 components, CF(1) - the catalytic core - and CF(0) - the membrane proton channel. CF(1) has five subunits: alpha(3), beta(3), gamma(1), delta(1), epsilon(1). CF(0) has three main subunits: a(1), b(2) and c(9-12). The alpha and beta chains form an alternating ring which encloses part of the gamma chain. CF(1) is attached to CF(0) by a central stalk formed by the gamma and epsilon chains, while a peripheral stalk is formed by the delta and b chains.

The protein resides in the cell inner membrane. In terms of biological role, key component of the proton channel; it plays a direct role in the translocation of protons across the membrane. This chain is ATP synthase subunit a, found in Azorhizobium caulinodans (strain ATCC 43989 / DSM 5975 / JCM 20966 / LMG 6465 / NBRC 14845 / NCIMB 13405 / ORS 571).